The chain runs to 167 residues: uncharacterized protein (167 aa).

The disordered stretch occupies residues 140-167; sequence SSEEKKKKKKKKKEKSLHTEREKKKKKF. A compositionally biased stretch (basic residues) spans 145–154; the sequence is KKKKKKKKEK.

This is an uncharacterized protein from Saccharomyces cerevisiae (strain ATCC 204508 / S288c) (Baker's yeast).